Reading from the N-terminus, the 327-residue chain is Flap endonuclease 1 (327 aa).

The tract at residues 1–98 (MGVKLKDIIQ…ETIDQRRQTR (98 aa)) is N-domain. Residues aspartate 27, aspartate 80, glutamate 152, glutamate 154, aspartate 173, aspartate 175, and aspartate 226 each coordinate Mg(2+). The segment at 116–246 (EARKYAMRSS…KTALKLAKKG (131 aa)) is I-domain. The interaction with PCNA stretch occupies residues 319–327 (SQKSLEDWF).

The protein belongs to the XPG/RAD2 endonuclease family. FEN1 subfamily. In terms of assembly, interacts with PCNA. PCNA stimulates the nuclease activity without altering cleavage specificity. It depends on Mg(2+) as a cofactor.

In terms of biological role, structure-specific nuclease with 5'-flap endonuclease and 5'-3' exonuclease activities involved in DNA replication and repair. During DNA replication, cleaves the 5'-overhanging flap structure that is generated by displacement synthesis when DNA polymerase encounters the 5'-end of a downstream Okazaki fragment. Binds the unpaired 3'-DNA end and kinks the DNA to facilitate 5' cleavage specificity. Cleaves one nucleotide into the double-stranded DNA from the junction in flap DNA, leaving a nick for ligation. Also involved in the base excision repair (BER) pathway. Acts as a genome stabilization factor that prevents flaps from equilibrating into structures that lead to duplications and deletions. Also possesses 5'-3' exonuclease activity on nicked or gapped double-stranded DNA. The protein is Flap endonuclease 1 of Methanobrevibacter smithii (strain ATCC 35061 / DSM 861 / OCM 144 / PS).